A 360-amino-acid polypeptide reads, in one-letter code: Insulin gene enhancer protein ISL-2 (360 aa).

2 consecutive LIM zinc-binding domains span residues 25-86 (AMCV…RLFG) and 87-149 (IKCA…LLER). The interval 151–177 (AAGSPRSPGPLPGTPPGLHLPDAGSGQ) is disordered. Residues Ser-154 and Ser-157 each carry the phosphoserine modification. The homeobox DNA-binding region spans 192-251 (TTRVRTVLNEKQLHTLRTCYAANPRPDALMKEQLVEMTGLSPRVIRVWFQNKRCKDKKKS). The interval 273–302 (GTLLVAGSPSAHENAVQGSAVEVQTYQPPW) is LIM-binding domain (LID). Phosphoserine is present on Ser-280. Low complexity predominate over residues 328–337 (SGSLGNSSGS). Residues 328–360 (SGSLGNSSGSDVTSLSSQLPDTPNSMVPSPVET) are disordered. Residues 338–360 (DVTSLSSQLPDTPNSMVPSPVET) show a composition bias toward polar residues.

As to quaternary structure, interacts with LHX4.

It localises to the nucleus. Functionally, transcriptional factor that defines subclasses of motoneurons that segregate into columns in the spinal cord and select distinct axon pathways. This chain is Insulin gene enhancer protein ISL-2 (Isl2), found in Rattus norvegicus (Rat).